The chain runs to 521 residues: Apolipoprotein N-acyltransferase (521 aa).

Transmembrane regions (helical) follow at residues 24-44 (IKETGYSILGFVAYVPLFIAL), 71-91 (WLGFFHAFGWITFIGVIIGYI), 128-148 (IGFLAYPWGLAAFTVNNFNNL), 151-171 (IADIFGVFFVSFAVYFLNSGI), and 182-202 (NLLNIAFPTLLITASFTYGMI). The CN hydrolase domain occupies 218-472 (LNIAAIQLNT…KGYLLSTVKL (255 aa)). The Proton acceptor role is filled by Glu-263. Lys-331 is a catalytic residue. The Nucleophile role is filled by Cys-383.

It belongs to the CN hydrolase family. Apolipoprotein N-acyltransferase subfamily.

The protein resides in the cell inner membrane. The catalysed reaction is N-terminal S-1,2-diacyl-sn-glyceryl-L-cysteinyl-[lipoprotein] + a glycerophospholipid = N-acyl-S-1,2-diacyl-sn-glyceryl-L-cysteinyl-[lipoprotein] + a 2-acyl-sn-glycero-3-phospholipid + H(+). Its pathway is protein modification; lipoprotein biosynthesis (N-acyl transfer). Catalyzes the phospholipid dependent N-acylation of the N-terminal cysteine of apolipoprotein, the last step in lipoprotein maturation. The polypeptide is Apolipoprotein N-acyltransferase (Borreliella burgdorferi (strain ATCC 35210 / DSM 4680 / CIP 102532 / B31) (Borrelia burgdorferi)).